The primary structure comprises 326 residues: Cytosolic sulfotransferase 7 (326 aa).

Position 72 to 77 (72 to 77) interacts with 3'-phosphoadenylyl sulfate; it reads KSGTTW. The active-site Proton acceptor is the His138. 3'-phosphoadenylyl sulfate-binding positions include Arg160, Ser168, Tyr226, and 292–294; that span reads RKG.

It belongs to the sulfotransferase 1 family.

It localises to the cytoplasm. Sulfotransferase that utilizes 3'-phospho-5'-adenylyl sulfate (PAPS) as sulfonate donor. This chain is Cytosolic sulfotransferase 7 (SOT7), found in Arabidopsis thaliana (Mouse-ear cress).